Here is a 325-residue protein sequence, read N- to C-terminus: Aerobic respiration control sensor protein ArcB homolog (325 aa).

Over 1–26 (MKNFKYFAQSYVDWVIRLGRLRFSLL) the chain is Cytoplasmic. A helical membrane pass occupies residues 27-47 (GVMILAVLALCTQILFSLFIV). At 48–57 (HQISWVDIFR) the chain is on the periplasmic side. A helical transmembrane segment spans residues 58–78 (SVTFGLLTAPFVIYFFTLLVE). Topologically, residues 79–325 (KLEHSRLDLS…AQLMGRGFNS (247 aa)) are cytoplasmic. One can recognise a Histidine kinase domain in the interval 128-325 (TISHEFRTPL…AQLMGRGFNS (198 aa)). A Phosphohistidine; by autocatalysis modification is found at histidine 131.

It localises to the cell inner membrane. It carries out the reaction ATP + protein L-histidine = ADP + protein N-phospho-L-histidine.. Member of the two-component regulatory system ArcB/ArcA. Activates ArcA by phosphorylation. This Haemophilus influenzae (strain ATCC 51907 / DSM 11121 / KW20 / Rd) protein is Aerobic respiration control sensor protein ArcB homolog (arcB).